The chain runs to 193 residues: Peptidyl-tRNA hydrolase 1 (193 aa).

Tyr-27 is a binding site for tRNA. His-32 serves as the catalytic Proton acceptor. Phe-80, Asn-82, and Asn-128 together coordinate tRNA.

The protein belongs to the PTH family. As to quaternary structure, monomer.

The protein localises to the cytoplasm. The catalysed reaction is an N-acyl-L-alpha-aminoacyl-tRNA + H2O = an N-acyl-L-amino acid + a tRNA + H(+). Functionally, hydrolyzes ribosome-free peptidyl-tRNAs (with 1 or more amino acids incorporated), which drop off the ribosome during protein synthesis, or as a result of ribosome stalling. Catalyzes the release of premature peptidyl moieties from peptidyl-tRNA molecules trapped in stalled 50S ribosomal subunits, and thus maintains levels of free tRNAs and 50S ribosomes. The protein is Peptidyl-tRNA hydrolase 1 of Corynebacterium jeikeium (strain K411).